We begin with the raw amino-acid sequence, 275 residues long: DNA-directed RNA polymerase subunit Rpo3 (275 aa).

The protein belongs to the archaeal Rpo3/eukaryotic RPB3 RNA polymerase subunit family. As to quaternary structure, part of the RNA polymerase complex.

It is found in the cytoplasm. It carries out the reaction RNA(n) + a ribonucleoside 5'-triphosphate = RNA(n+1) + diphosphate. Functionally, DNA-dependent RNA polymerase (RNAP) catalyzes the transcription of DNA into RNA using the four ribonucleoside triphosphates as substrates. In Methanopyrus kandleri (strain AV19 / DSM 6324 / JCM 9639 / NBRC 100938), this protein is DNA-directed RNA polymerase subunit Rpo3.